The following is a 408-amino-acid chain: Peptidase T (408 aa).

Position 78 (His-78) interacts with Zn(2+). The active site involves Asp-80. Position 141 (Asp-141) interacts with Zn(2+). Glu-175 (proton acceptor) is an active-site residue. Zn(2+)-binding residues include Glu-176, Asp-198, and His-380.

It belongs to the peptidase M20B family. It depends on Zn(2+) as a cofactor.

It localises to the cytoplasm. The enzyme catalyses Release of the N-terminal residue from a tripeptide.. Functionally, cleaves the N-terminal amino acid of tripeptides. This chain is Peptidase T, found in Clostridium botulinum (strain Langeland / NCTC 10281 / Type F).